We begin with the raw amino-acid sequence, 558 residues long: MAQGSDIEIAREAKMQNIAEVGAKVGIPQDALLNYGPYKAKLSWDFINSVQGNQDGKLILVTAINPTPAGEGKTTTTVGLADGLNRIGKKTVAALREPSLGPCFGVKGGAAGGGYAQVVPMEDINLHFTGDFHAITSANNLLAALIDNHIYWGNKLGLDPRRIAWRRVLDMNDRALRSIVNSLGGVSNGYPREDGFDITVASEVMAILCLSSDLKDLERRLGNIHAGYTRERKAVLASELNASGAMTVLLKDALQPNMVQTLENNPVLIHGGPFANIAHGCNSVLATKTALKIADYVVTEAGFGADLGAEKFFDIKCRKAGLKPSAAVIVATIRALKMHGGVDKADLGTANPEAVRKGGVNLARHIENVRQFGVPVVVAINQFITDTDEEMAMVKEIAEAAGAEAVLCSHWANGSAGTEELARKVVLHAESGSSNFAPLYEDSMPLFEKIDTIAKRIYRATEATADSSVRNKLKGWEADGFGHLPVCMAKTQYSFSTDPALRGAPTDHVVPVRDVILSAGAEFIVAVCGDIMRMPGLPKVPSADFIKLDEQGQIQGLF.

Thr67–Thr74 serves as a coordination point for ATP.

Belongs to the formate--tetrahydrofolate ligase family.

The catalysed reaction is (6S)-5,6,7,8-tetrahydrofolate + formate + ATP = (6R)-10-formyltetrahydrofolate + ADP + phosphate. Its pathway is one-carbon metabolism; tetrahydrofolate interconversion. The sequence is that of Formate--tetrahydrofolate ligase from Sphingobium sp. (strain NBRC 103272 / SYK-6).